The sequence spans 324 residues: Elongation factor P--(R)-beta-lysine ligase (324 aa).

75–77 (SPE) contacts substrate. ATP is bound by residues 99-101 (RNK) and Asn108. Tyr117 is a substrate binding site. An ATP-binding site is contributed by 243 to 244 (EL). Glu250 provides a ligand contact to substrate. ATP is bound at residue Gly299.

This sequence belongs to the class-II aminoacyl-tRNA synthetase family. EpmA subfamily. Homodimer.

The enzyme catalyses D-beta-lysine + L-lysyl-[protein] + ATP = N(6)-((3R)-3,6-diaminohexanoyl)-L-lysyl-[protein] + AMP + diphosphate + H(+). With EpmB is involved in the beta-lysylation step of the post-translational modification of translation elongation factor P (EF-P). Catalyzes the ATP-dependent activation of (R)-beta-lysine produced by EpmB, forming a lysyl-adenylate, from which the beta-lysyl moiety is then transferred to the epsilon-amino group of a conserved specific lysine residue in EF-P. This Buchnera aphidicola subsp. Acyrthosiphon pisum (strain 5A) protein is Elongation factor P--(R)-beta-lysine ligase.